Here is a 175-residue protein sequence, read N- to C-terminus: Bcl-2-related protein A1 (175 aa).

Belongs to the Bcl-2 family. Interacts directly with BCL2L11/BIM, BAK1, BID, BMF and BBC3. Interacts directly with PMAIP1. Interacts with BOP. Interacts with ING4. Interacts with UBQLN4.

It is found in the cytoplasm. In terms of biological role, retards apoptosis induced by IL-3 deprivation. May function in the response of hemopoietic cells to external signals and in maintaining endothelial survival during infection. Can inhibit apoptosis induced by serum starvation in the mammary epithelial cell line HC11. The sequence is that of Bcl-2-related protein A1 (BCL2A1) from Bos taurus (Bovine).